The chain runs to 237 residues: Survival of motor neuron-related-splicing factor 30 (237 aa).

Residues 52–69 (SQPAEGTTSTKSSETVAP) are compositionally biased toward polar residues. 2 disordered regions span residues 52–73 (SQPAEGTTSTKSSETVAPSHSW) and 149–198 (REYK…RSIF). The Tudor domain occupies 72-132 (SWRVGDHCMA…KKVEEGRIRD (61 aa)). A Nuclear localization signal motif is present at residues 142 to 160 (KELQAEQREYKKKKAQKKV). Positions 151 to 161 (YKKKKAQKKVQ) are enriched in basic residues. The span at 162–175 (RMKELEQEREDQKS) shows a compositional bias: basic and acidic residues. The segment covering 176-185 (KWQQFNNKAY) has biased composition (polar residues).

Belongs to the SMN family. In terms of assembly, associates with spliceosomes.

It localises to the nucleus speckle. It is found in the nucleus. The protein localises to the cajal body. In terms of biological role, involved in spliceosome assembly. This chain is Survival of motor neuron-related-splicing factor 30 (smndc1), found in Danio rerio (Zebrafish).